The following is a 70-amino-acid chain: Plasticin-S1 (70 aa).

A signal peptide spans 1–22; it reads MAFLKKSLFLVLFLALVPLSIC. The propeptide occupies 23-45; that stretch reads EEEKREGENEKEQEDDNQSEEKR. The segment at 25–45 is disordered; the sequence is EKREGENEKEQEDDNQSEEKR.

It belongs to the frog skin active peptide (FSAP) family. Plasticin subfamily. In terms of tissue distribution, expressed by the skin glands.

The protein resides in the secreted. Functionally, the native peptide is a cationic amphipathic alpha-helical antimicrobial peptide with potent activity against both Gram-positive and Gram-negative bacteria. It has weak activity against fungi and shows low hemolytic activity. The sequence is that of Plasticin-S1 from Phyllomedusa sauvagei (Sauvage's leaf frog).